The primary structure comprises 551 residues: Cytochrome P450 monooxygenase abl5 (551 aa).

Asparagine 24 carries N-linked (GlcNAc...) asparagine glycosylation. The helical transmembrane segment at 37-57 threads the bilayer; the sequence is VVLNTLTAIVVVWICYRAVIY. Asparagine 174, asparagine 218, asparagine 283, asparagine 307, and asparagine 441 each carry an N-linked (GlcNAc...) asparagine glycan. Residue cysteine 495 participates in heme binding.

The protein belongs to the cytochrome P450 family. Heme is required as a cofactor.

The protein localises to the membrane. Cytochrome P450 monooxygenase; part of the gene cluster that mediates the biosynthesis of abscisic acid (ABA), a phytohormone that acts antagonistically toward salicylic acid (SA), jasmonic acid (JA) and ethylene (ETH) signaling, to impede plant defense responses. The first step of the pathway catalyzes the reaction from farnesyl diphosphate to alpha-ionylideneethane performed by the alpha-ionylideneethane synthase abl3 via a three-step reaction mechanism involving 2 neutral intermediates, beta-farnesene and allofarnesene. The cytochrome P450 monooxygenase abl1 might then be involved in the conversion of alpha-ionylideneethane to alpha-ionylideneacetic acid. Alpha-ionylideneacetic acid is further converted to abscisic acid in 2 steps involving the cytochrome P450 monooxygenase abl2 and the short-chain dehydrogenase/reductase abl4, via the intermediates 1'-deoxy-ABA or 1',4'-trans-diol-ABA, depending on the order of action of these 2 enzymes. Abl2 is responsible for the hydroxylation of carbon atom C-1' and abl4 might be involved in the oxidation of the C-4' carbon atom. The cytochrome monooxygenase abl5 seems not essential for the biosynthesis of ABA and its function remains to be identified. This chain is Cytochrome P450 monooxygenase abl5, found in Leptosphaeria maculans (strain JN3 / isolate v23.1.3 / race Av1-4-5-6-7-8) (Blackleg fungus).